We begin with the raw amino-acid sequence, 151 residues long: Myosin light polypeptide 6 (151 aa).

The residue at position 2 (Cys2) is an N-acetylcysteine. The EF-hand 1 domain occupies Asp7–Asn42. Ser57 carries the phosphoserine modification. Lys81 bears the N6-acetyllysine mark. EF-hand domains follow at residues Gly84–Lys119 and Lys119–Gly151.

Myosin is a hexamer of 2 heavy chains and 4 light chains. Interacts with SPATA6.

Regulatory light chain of myosin. Does not bind calcium. This is Myosin light polypeptide 6 (Myl6) from Rattus norvegicus (Rat).